The primary structure comprises 272 residues: Small ribosomal subunit biogenesis GTPase RsgA (272 aa).

Residues 56-207 (KNILIRPKVA…IIDTPGFSSI (152 aa)) form the CP-type G domain. Residues 105–108 (TKAD) and 151–159 (GQSGVGKTT) contribute to the GTP site. 4 residues coordinate Zn(2+): Cys-230, Cys-235, His-237, and Cys-245.

This sequence belongs to the TRAFAC class YlqF/YawG GTPase family. RsgA subfamily. As to quaternary structure, monomer. Associates with 30S ribosomal subunit, binds 16S rRNA. It depends on Zn(2+) as a cofactor.

The protein localises to the cytoplasm. In terms of biological role, one of several proteins that assist in the late maturation steps of the functional core of the 30S ribosomal subunit. Helps release RbfA from mature subunits. May play a role in the assembly of ribosomal proteins into the subunit. Circularly permuted GTPase that catalyzes slow GTP hydrolysis, GTPase activity is stimulated by the 30S ribosomal subunit. The chain is Small ribosomal subunit biogenesis GTPase RsgA from Mycoplasmopsis pulmonis (strain UAB CTIP) (Mycoplasma pulmonis).